We begin with the raw amino-acid sequence, 697 residues long: Polyribonucleotide nucleotidyltransferase (697 aa).

Mg(2+)-binding residues include Asp-488 and Asp-494. The region spanning 555–614 (PTFEVITINPDKIRDVIGKGGATIRQITEETKAAIDIEDNGTVRVFGETKAAARAAIAKI) is the KH domain. An S1 motif domain is found at 624–692 (GKIYDGKVIR…NRGRIKLSMK (69 aa)).

It belongs to the polyribonucleotide nucleotidyltransferase family. In terms of assembly, component of the RNA degradosome, which is a multiprotein complex involved in RNA processing and mRNA degradation. Mg(2+) is required as a cofactor.

Its subcellular location is the cytoplasm. The enzyme catalyses RNA(n+1) + phosphate = RNA(n) + a ribonucleoside 5'-diphosphate. Its function is as follows. Involved in mRNA degradation. Catalyzes the phosphorolysis of single-stranded polyribonucleotides processively in the 3'- to 5'-direction. In Acinetobacter baylyi (strain ATCC 33305 / BD413 / ADP1), this protein is Polyribonucleotide nucleotidyltransferase.